The sequence spans 281 residues: L-cysteine S-thiosulfotransferase subunit SoxA (281 aa).

Residues methionine 1 to alanine 25 form the signal peptide. Cysteines 99 and 130 form a disulfide. The Cytochrome c domain maps to alanine 175–lysine 281. Residues cysteine 195 and histidine 199 each coordinate heme. Residue arginine 238 participates in substrate binding. A heme-binding site is contributed by cysteine 242. The Cysteine persulfide intermediate role is filled by cysteine 242.

This sequence belongs to the SoxA family. In terms of assembly, heterodimer of SoxA and SoxX. Requires heme as cofactor. In terms of processing, cysteine persulfide at Cys-242.

It is found in the periplasm. It catalyses the reaction L-cysteinyl-[SoxY protein] + thiosulfate + 2 Fe(III)-[cytochrome c] = S-sulfosulfanyl-L-cysteinyl-[SoxY protein] + 2 Fe(II)-[cytochrome c] + 2 H(+). It carries out the reaction S-sulfanyl-L-cysteinyl-[SoxY protein] + thiosulfate + 2 Fe(III)-[cytochrome c] = S-(2-sulfodisulfanyl)-L-cysteinyl-[SoxY protein] + 2 Fe(II)-[cytochrome c] + 2 H(+). C-type monoheme cytochrome, which is part of the SoxAX cytochrome complex involved in sulfur oxidation. The SoxAX complex catalyzes the formation of a heterodisulfide bond between the conserved cysteine residue on a sulfur carrier SoxYZ complex subunit SoxY and thiosulfate or other inorganic sulfur substrates. This leads to the intermediary formation of conspicuous sulfur globules inside of the cells. In Allochromatium vinosum (Chromatium vinosum), this protein is L-cysteine S-thiosulfotransferase subunit SoxA.